The chain runs to 177 residues: Alkyl hydroperoxide reductase AhpD (177 aa).

Cys131 acts as the Proton donor in catalysis. Cys131 and Cys134 are disulfide-bonded. The Cysteine sulfenic acid (-SOH) intermediate role is filled by Cys134.

It belongs to the AhpD family. In terms of assembly, homotrimer.

The catalysed reaction is N(6)-[(R)-dihydrolipoyl]-L-lysyl-[lipoyl-carrier protein] + a hydroperoxide = N(6)-[(R)-lipoyl]-L-lysyl-[lipoyl-carrier protein] + an alcohol + H2O. Antioxidant protein with alkyl hydroperoxidase activity. Required for the reduction of the AhpC active site cysteine residues and for the regeneration of the AhpC enzyme activity. This Streptomyces griseus subsp. griseus (strain JCM 4626 / CBS 651.72 / NBRC 13350 / KCC S-0626 / ISP 5235) protein is Alkyl hydroperoxide reductase AhpD.